Here is a 151-residue protein sequence, read N- to C-terminus: Large ribosomal subunit protein eL19 (151 aa).

Residues 62-93 form a disordered region; that stretch reads RLKERRKKRSLKSEGKKSGSRKGKKGARANSK. Positions 79–88 are enriched in basic residues; that stretch reads SGSRKGKKGA.

This sequence belongs to the eukaryotic ribosomal protein eL19 family. As to quaternary structure, part of the 50S ribosomal subunit.

Its function is as follows. Binds to the 23S rRNA. This Saccharolobus solfataricus (strain ATCC 35092 / DSM 1617 / JCM 11322 / P2) (Sulfolobus solfataricus) protein is Large ribosomal subunit protein eL19.